The primary structure comprises 48 residues: Small, acid-soluble spore protein P (48 aa).

The segment covering 1-12 has biased composition (basic and acidic residues); the sequence is MTNKNDGKDMRK. The interval 1–48 is disordered; that stretch reads MTNKNDGKDMRKNAPKGDNPGQPEPLDGSKKVKNRNHTRQKHNTSHDM. The span at 31–48 shows a compositional bias: basic residues; sequence KVKNRNHTRQKHNTSHDM.

This sequence belongs to the SspP family.

The protein localises to the spore core. In Geobacillus kaustophilus (strain HTA426), this protein is Small, acid-soluble spore protein P.